The primary structure comprises 387 residues: Ferrochelatase (387 aa).

Residues His-196 and Glu-277 each coordinate Fe cation.

The protein belongs to the ferrochelatase family.

Its subcellular location is the cytoplasm. It catalyses the reaction heme b + 2 H(+) = protoporphyrin IX + Fe(2+). The protein operates within porphyrin-containing compound metabolism; protoheme biosynthesis; protoheme from protoporphyrin-IX: step 1/1. Catalyzes the ferrous insertion into protoporphyrin IX. In Synechococcus elongatus (strain ATCC 33912 / PCC 7942 / FACHB-805) (Anacystis nidulans R2), this protein is Ferrochelatase.